Consider the following 898-residue polypeptide: Inner centromere protein (898 aa).

8 disordered regions span residues 50 to 127, 251 to 282, 358 to 379, 406 to 470, 525 to 548, 564 to 677, 707 to 770, and 802 to 824; these read AEPE…TRAR, PANE…SVRR, ETAP…RRSL, MVAM…PPPH, KEEA…EELK, RVEQ…RQRE, ERAA…PVMN, and NYGM…KPIP. A compositionally biased stretch (basic residues) spans 60–69; that stretch reads SQKRRRKKRT. Positions 90 to 99 are enriched in low complexity; that stretch reads SANWSNSVRR. Residues 259–272 are compositionally biased toward polar residues; the sequence is QPLNLTNQSVTPTG. 2 stretches are compositionally biased toward basic and acidic residues: residues 367 to 376 and 431 to 449; these read EEAHTIESPR and RAVD…ERSP. The segment covering 455 to 470 has biased composition (pro residues); it reads PSPPCPPSKIVKPPPH. Residues 512 to 730 are SAH; sequence KEKERQRLDA…EERKKREQQE (219 aa). 3 stretches are compositionally biased toward basic and acidic residues: residues 564-600, 607-677, and 707-759; these read RVEQ…EEKA, KKQE…RQRE, and ERAA…KAKE. The interval 807–881 is IN box; it reads LNSDDSTDDE…RTSSAVWHSP (75 aa). Phosphoserine occurs at positions 874 and 875.

It belongs to the INCENP family. As to quaternary structure, component of the CPC at least composed of survivin/birc5, incenp, cdca8/borealin and/or cdca9/dasra-A, and aurkb/aurora-B. Interacts (via C-terminus) with aurkb (via N-terminus and kinase domain). Interacts (via N-terminus) with birc5.1, birc5.2, cdca8 and cdca9. Interacts with mtus1.

The protein localises to the nucleus. The protein resides in the chromosome. It is found in the centromere. Its subcellular location is the cytoplasm. It localises to the cytoskeleton. The protein localises to the spindle. The protein resides in the midbody. It is found in the kinetochore. In terms of biological role, component of the chromosomal passenger complex (CPC), a complex that acts as a key regulator of mitosis. The CPC complex has essential functions at the centromere in ensuring correct chromosome alignment and segregation and is required for chromatin-induced microtubule stabilization and spindle assembly. Acts as a scaffold regulating CPC localization and activity. The C-terminus associates with aurkb/aurora-B, the N-terminus associated with cdca8/borealin and/or cdca9/dasra-A tethers the CPC to the inner centromere, and the microtubule binding activity within the central SAH domain directs aurkb/aurora-B toward substrates near microtubules. Activates aurkb. The protein is Inner centromere protein (incenp) of Xenopus tropicalis (Western clawed frog).